The following is a 185-amino-acid chain: Ribosome-recycling factor (185 aa).

This sequence belongs to the RRF family.

The protein resides in the cytoplasm. In terms of biological role, responsible for the release of ribosomes from messenger RNA at the termination of protein biosynthesis. May increase the efficiency of translation by recycling ribosomes from one round of translation to another. The protein is Ribosome-recycling factor of Lacticaseibacillus casei (strain BL23) (Lactobacillus casei).